The following is a 532-amino-acid chain: Apolipoprotein N-acyltransferase (532 aa).

6 helical membrane passes run 37-57 (IFVA…GAIA), 75-95 (WWFG…ALLV), 106-126 (LAVL…AMIA), 128-148 (LLWS…ALAE), 179-199 (VIGL…PALL), and 207-227 (TGIG…AWTL). One can recognise a CN hydrolase domain in the interval 245-494 (VQPSIAQAMK…VGVVDSYLPS (250 aa)). The active-site Proton acceptor is Glu-289. Lys-353 is an active-site residue. Cys-406 functions as the Nucleophile in the catalytic mechanism. A helical transmembrane segment spans residues 505-525 (GWIQTVLILLTLLAASVGLIL).

It belongs to the CN hydrolase family. Apolipoprotein N-acyltransferase subfamily.

The protein resides in the cell inner membrane. The enzyme catalyses N-terminal S-1,2-diacyl-sn-glyceryl-L-cysteinyl-[lipoprotein] + a glycerophospholipid = N-acyl-S-1,2-diacyl-sn-glyceryl-L-cysteinyl-[lipoprotein] + a 2-acyl-sn-glycero-3-phospholipid + H(+). It participates in protein modification; lipoprotein biosynthesis (N-acyl transfer). In terms of biological role, catalyzes the phospholipid dependent N-acylation of the N-terminal cysteine of apolipoprotein, the last step in lipoprotein maturation. The polypeptide is Apolipoprotein N-acyltransferase (Brucella melitensis biotype 1 (strain ATCC 23456 / CCUG 17765 / NCTC 10094 / 16M)).